The primary structure comprises 628 residues: Probable potassium transport system protein Kup 1 (628 aa).

The next 12 helical transmembrane spans lie at 18–38, 58–78, 106–126, 141–161, 175–195, 219–239, 253–273, 285–305, 343–363, 371–391, 401–421, and 425–445; these read ITLAALGVVYGDLGTSPLYAL, IVSLFFWTIMIVVSFKYVLLV, ALLMLLGLVGVGLFIGDAVIT, ITPELAPFVLPITLTVLVILF, FGPIMLLWFGVLAALGAYEIV, IAFITLGAVVLCVTGTEALYA, WGSLVMPALLLNYFGQGALLL, LLAPSWLAFPLLILATLATVI, IYLPLVNWLLLGGIIIVIIWF, AAYGIAVTGTMALTTLLLMVV, WLIALICAPLLLVDVTFFAAN, and FLAGGWLPILFALLAIIVMTT.

The protein belongs to the HAK/KUP transporter (TC 2.A.72) family.

It localises to the cell inner membrane. The catalysed reaction is K(+)(in) + H(+)(in) = K(+)(out) + H(+)(out). Functionally, transport of potassium into the cell. Likely operates as a K(+):H(+) symporter. The protein is Probable potassium transport system protein Kup 1 of Aeromonas hydrophila subsp. hydrophila (strain ATCC 7966 / DSM 30187 / BCRC 13018 / CCUG 14551 / JCM 1027 / KCTC 2358 / NCIMB 9240 / NCTC 8049).